Consider the following 169-residue polypeptide: Inorganic pyrophosphatase (169 aa).

Met1 carries the N-formylmethionine modification. Substrate contacts are provided by Lys28, Arg42, and Tyr54. Mg(2+) is bound by residues Asp64, Asp69, and Asp101. Tyr138 is a binding site for substrate.

The protein belongs to the PPase family. In terms of assembly, homohexamer. Requires Mg(2+) as cofactor.

It localises to the cytoplasm. The catalysed reaction is diphosphate + H2O = 2 phosphate + H(+). Inhibited by ATP, but not by fructose 1,6-bisphosphate or 2-phosphoglycerate. Functionally, hydrolyzes PPi generated in anabolic reactions. Its function is as follows. Catalyzes the hydrolysis of inorganic pyrophosphate (PPi) forming two phosphate ions. This Synechocystis sp. (strain ATCC 27184 / PCC 6803 / Kazusa) protein is Inorganic pyrophosphatase.